A 544-amino-acid polypeptide reads, in one-letter code: uncharacterized protein (544 aa).

This is an uncharacterized protein from Acanthamoeba polyphaga mimivirus (APMV).